The sequence spans 168 residues: Photosystem I assembly protein Ycf3 (168 aa).

TPR repeat units lie at residues 35–68 (AFTY…EMDP), 72–105 (SYIL…NPFL), and 120–153 (GEQA…TPGN).

Belongs to the Ycf3 family.

It is found in the plastid. Its subcellular location is the chloroplast thylakoid membrane. Essential for the assembly of the photosystem I (PSI) complex. May act as a chaperone-like factor to guide the assembly of the PSI subunits. This is Photosystem I assembly protein Ycf3 from Pelargonium hortorum (Common geranium).